The following is a 192-amino-acid chain: Ras-like protein RAS2 (192 aa).

A GTP-binding site is contributed by 15–22; sequence GGGGVGKS. The Effector region signature appears at 37–45; sequence YDPTIEDSY. GTP contacts are provided by residues 62–66 and 121–124; these read DTAGQ and NKSD. Residue cysteine 189 is modified to Cysteine methyl ester. The S-geranylgeranyl cysteine moiety is linked to residue cysteine 189. Positions 190-192 are cleaved as a propeptide — removed in mature form; sequence IVL.

It belongs to the small GTPase superfamily. Ras family.

The protein localises to the cell membrane. The enzyme catalyses GTP + H2O = GDP + phosphate + H(+). Its activity is regulated as follows. Alternates between an inactive form bound to GDP and an active form bound to GTP. Activated by a guanine nucleotide-exchange factor (GEF) and inactivated by a GTPase-activating protein (GAP). Ras proteins bind GDP/GTP and possess intrinsic GTPase activity. The chain is Ras-like protein RAS2 (RAS2) from Hydra vulgaris (Hydra).